A 213-amino-acid polypeptide reads, in one-letter code: Orotate phosphoribosyltransferase (213 aa).

Lys-26 provides a ligand contact to 5-phospho-alpha-D-ribose 1-diphosphate. An orotate-binding site is contributed by 34 to 35 (FF). 5-phospho-alpha-D-ribose 1-diphosphate is bound by residues 72 to 73 (YK), Arg-99, Lys-100, Lys-103, His-105, and 124 to 132 (DDVITAGTA). Thr-128 and Arg-156 together coordinate orotate.

The protein belongs to the purine/pyrimidine phosphoribosyltransferase family. PyrE subfamily. Homodimer. Requires Mg(2+) as cofactor.

The enzyme catalyses orotidine 5'-phosphate + diphosphate = orotate + 5-phospho-alpha-D-ribose 1-diphosphate. It participates in pyrimidine metabolism; UMP biosynthesis via de novo pathway; UMP from orotate: step 1/2. Catalyzes the transfer of a ribosyl phosphate group from 5-phosphoribose 1-diphosphate to orotate, leading to the formation of orotidine monophosphate (OMP). In Aliivibrio fischeri (strain MJ11) (Vibrio fischeri), this protein is Orotate phosphoribosyltransferase.